A 468-amino-acid chain; its full sequence is 3-isopropylmalate dehydratase large subunit (468 aa).

C347, C407, and C410 together coordinate [4Fe-4S] cluster.

Belongs to the aconitase/IPM isomerase family. LeuC type 1 subfamily. Heterodimer of LeuC and LeuD. [4Fe-4S] cluster is required as a cofactor.

The enzyme catalyses (2R,3S)-3-isopropylmalate = (2S)-2-isopropylmalate. The protein operates within amino-acid biosynthesis; L-leucine biosynthesis; L-leucine from 3-methyl-2-oxobutanoate: step 2/4. Its function is as follows. Catalyzes the isomerization between 2-isopropylmalate and 3-isopropylmalate, via the formation of 2-isopropylmaleate. The protein is 3-isopropylmalate dehydratase large subunit of Prochlorococcus marinus (strain AS9601).